The sequence spans 180 residues: Ribulose bisphosphate carboxylase small subunit, chloroplastic 2 (180 aa).

The transit peptide at 1–56 (MASSVISSAAVATRSNVTQASMVAPFTGLKSSATFPVTKKQNLDITSIASNGGRVS) directs the protein to the chloroplast.

It belongs to the RuBisCO small chain family. In terms of assembly, heterohexadecamer of 8 large and 8 small subunits. (Microbial infection) Binds to tobamovirus movement protein; this interaction seems required for viral systemic movement.

It is found in the plastid. Its subcellular location is the chloroplast. The protein resides in the cell junction. The protein localises to the plasmodesma. Functionally, ruBisCO catalyzes two reactions: the carboxylation of D-ribulose 1,5-bisphosphate, the primary event in carbon dioxide fixation, as well as the oxidative fragmentation of the pentose substrate. Both reactions occur simultaneously and in competition at the same active site. Although the small subunit is not catalytic it is essential for maximal activity. Involved in antiviral defenses. The sequence is that of Ribulose bisphosphate carboxylase small subunit, chloroplastic 2 from Solanum lycopersicum (Tomato).